Reading from the N-terminus, the 237-residue chain is Putative N-acetylmuramoyl-L-alanine amidase (237 aa).

A MurNAc-LAA domain is found at 7–225 (ILIDAGHGGY…IANSIYLGLK (219 aa)).

The protein belongs to the N-acetylmuramoyl-L-alanine amidase 3 family.

The protein resides in the secreted. The enzyme catalyses Hydrolyzes the link between N-acetylmuramoyl residues and L-amino acid residues in certain cell-wall glycopeptides.. In terms of biological role, cell-wall hydrolase involved in septum cleavage during cell division. This chain is Putative N-acetylmuramoyl-L-alanine amidase (amiB), found in Buchnera aphidicola subsp. Acyrthosiphon pisum (strain APS) (Acyrthosiphon pisum symbiotic bacterium).